We begin with the raw amino-acid sequence, 340 residues long: Heat-inducible transcription repressor HrcA (340 aa).

It belongs to the HrcA family.

In terms of biological role, negative regulator of class I heat shock genes (grpE-dnaK-dnaJ and groELS operons). Prevents heat-shock induction of these operons. The protein is Heat-inducible transcription repressor HrcA of Burkholderia vietnamiensis (strain G4 / LMG 22486) (Burkholderia cepacia (strain R1808)).